Reading from the N-terminus, the 188-residue chain is Probable nicotinate-nucleotide adenylyltransferase (188 aa).

Belongs to the NadD family.

The enzyme catalyses nicotinate beta-D-ribonucleotide + ATP + H(+) = deamido-NAD(+) + diphosphate. It functions in the pathway cofactor biosynthesis; NAD(+) biosynthesis; deamido-NAD(+) from nicotinate D-ribonucleotide: step 1/1. Catalyzes the reversible adenylation of nicotinate mononucleotide (NaMN) to nicotinic acid adenine dinucleotide (NaAD). The polypeptide is Probable nicotinate-nucleotide adenylyltransferase (Solibacter usitatus (strain Ellin6076)).